We begin with the raw amino-acid sequence, 80 residues long: UPF0125 protein XF_2346 (80 aa).

Belongs to the UPF0125 (RnfH) family.

This is UPF0125 protein XF_2346 from Xylella fastidiosa (strain 9a5c).